A 606-amino-acid polypeptide reads, in one-letter code: DNA mismatch repair protein MutL (606 aa).

The interval His377–Arg401 is disordered.

This sequence belongs to the DNA mismatch repair MutL/HexB family.

Its function is as follows. This protein is involved in the repair of mismatches in DNA. It is required for dam-dependent methyl-directed DNA mismatch repair. May act as a 'molecular matchmaker', a protein that promotes the formation of a stable complex between two or more DNA-binding proteins in an ATP-dependent manner without itself being part of a final effector complex. In Geobacter sulfurreducens (strain ATCC 51573 / DSM 12127 / PCA), this protein is DNA mismatch repair protein MutL.